The chain runs to 236 residues: tRNA (guanine-N(7)-)-methyltransferase (236 aa).

Positions 1–17 (MSERKSDPDRDDSERAF) are enriched in basic and acidic residues. The interval 1-23 (MSERKSDPDRDDSERAFFGRRKG) is disordered. 4 residues coordinate S-adenosyl-L-methionine: Glu-67, Glu-92, Asp-119, and Asp-141. Asp-141 is a catalytic residue. Residues Lys-145 and Asp-177 each coordinate substrate.

It belongs to the class I-like SAM-binding methyltransferase superfamily. TrmB family.

The catalysed reaction is guanosine(46) in tRNA + S-adenosyl-L-methionine = N(7)-methylguanosine(46) in tRNA + S-adenosyl-L-homocysteine. The protein operates within tRNA modification; N(7)-methylguanine-tRNA biosynthesis. Its function is as follows. Catalyzes the formation of N(7)-methylguanine at position 46 (m7G46) in tRNA. The chain is tRNA (guanine-N(7)-)-methyltransferase from Bradyrhizobium diazoefficiens (strain JCM 10833 / BCRC 13528 / IAM 13628 / NBRC 14792 / USDA 110).